We begin with the raw amino-acid sequence, 393 residues long: MDTFLNTSESVNEGHPDKLCDQISDAVLDACLEQDPDSKVACETCSKTNMVMVFGEITTKANVDYEKIVRKTCRDIGFVSDDVGLDADNCKVLVQIEQQSPDIAQGVHGHLTKRPEDIGAGDQGHMFGYATDETPELMPLSHVLATKLGAKLTEVRKNGTCPWLRPDGKTQVTVEYYNDKGAMVPIRVHTVLISTQHDETVTNDEIAADLKEHVIKPIIPAKYLDEKTIFHLNPSGRFVIGGPHGDAGLTGRMIIIDTYGGWGAHGGGAFSGKDPTKVDRSGAYIVRQAAKSIVANGLARRCIVQVSYAIGVPDPLSVFVDSYGTGNIPDKEILKIVKETFDFRPGMIAINLDLKRGGNNRFLKTAAYGHFGRDDADFTWEVVKPLKWEKPQA.

Glu-9 contacts Mg(2+). His-15 is a binding site for ATP. Glu-43 is a binding site for K(+). L-methionine-binding residues include Glu-56 and Gln-99. ATP is bound by residues 167-169 (DGK), 235-238 (SGRF), Asp-246, 252-253 (RM), Ala-269, Lys-273, and Lys-277. Asp-246 lines the L-methionine pocket. Position 277 (Lys-277) interacts with L-methionine.

It belongs to the AdoMet synthase family. As to quaternary structure, homotetramer. The cofactor is Mn(2+). It depends on Mg(2+) as a cofactor. Co(2+) is required as a cofactor. K(+) serves as cofactor.

The protein localises to the cytoplasm. It catalyses the reaction L-methionine + ATP + H2O = S-adenosyl-L-methionine + phosphate + diphosphate. It participates in amino-acid biosynthesis; S-adenosyl-L-methionine biosynthesis; S-adenosyl-L-methionine from L-methionine: step 1/1. Functionally, catalyzes the formation of S-adenosylmethionine from methionine and ATP. The reaction comprises two steps that are both catalyzed by the same enzyme: formation of S-adenosylmethionine (AdoMet) and triphosphate, and subsequent hydrolysis of the triphosphate. This is S-adenosylmethionine synthase 2 (SAMS2) from Daucus carota (Wild carrot).